The sequence spans 377 residues: tRNA-specific 2-thiouridylase MnmA (377 aa).

Residues 22–29 (GMSGGVDS) and M48 contribute to the ATP site. Residues 108 to 110 (NPD) form an interaction with target base in tRNA region. Catalysis depends on C113, which acts as the Nucleophile. C113 and C210 are oxidised to a cystine. An ATP-binding site is contributed by G138. The interval 160–162 (KDQ) is interaction with tRNA. C210 (cysteine persulfide intermediate) is an active-site residue. Residues 322–323 (RY) are interaction with tRNA.

It belongs to the MnmA/TRMU family.

The protein localises to the cytoplasm. It catalyses the reaction S-sulfanyl-L-cysteinyl-[protein] + uridine(34) in tRNA + AH2 + ATP = 2-thiouridine(34) in tRNA + L-cysteinyl-[protein] + A + AMP + diphosphate + H(+). Catalyzes the 2-thiolation of uridine at the wobble position (U34) of tRNA, leading to the formation of s(2)U34. The protein is tRNA-specific 2-thiouridylase MnmA of Shewanella amazonensis (strain ATCC BAA-1098 / SB2B).